The sequence spans 726 residues: Catalase-peroxidase (726 aa).

The disordered stretch occupies residues 1–25 (MDAKTDDSAGKCPFTGGGRRGHRNR). The segment at residues 96–218 (WHSAGTYRIT…LAAVQMGLIY (123 aa)) is a cross-link (tryptophyl-tyrosyl-methioninium (Trp-Tyr) (with M-244)). H97 (proton acceptor) is an active-site residue. Residues 218-244 (YVNPEGPNGNPDPVAAAKDIRETFYRM) constitute a cross-link (tryptophyl-tyrosyl-methioninium (Tyr-Met) (with W-96)). H259 contacts heme b.

Belongs to the peroxidase family. Peroxidase/catalase subfamily. In terms of assembly, homodimer or homotetramer. Heme b serves as cofactor. In terms of processing, formation of the three residue Trp-Tyr-Met cross-link is important for the catalase, but not the peroxidase activity of the enzyme.

It carries out the reaction H2O2 + AH2 = A + 2 H2O. The catalysed reaction is 2 H2O2 = O2 + 2 H2O. In terms of biological role, bifunctional enzyme with both catalase and broad-spectrum peroxidase activity. This chain is Catalase-peroxidase, found in Chelativorans sp. (strain BNC1).